Here is a 169-residue protein sequence, read N- to C-terminus: Small ribosomal subunit protein uS5c (169 aa).

One can recognise an S5 DRBM domain in the interval 17–80; it reads WQERVVQIRR…ADGKKHVVEV (64 aa).

It belongs to the universal ribosomal protein uS5 family. In terms of assembly, part of the 30S ribosomal subunit. Contacts protein S4.

It localises to the plastid. It is found in the cyanelle. Its function is as follows. With S4 and S12 plays an important role in translational accuracy. The sequence is that of Small ribosomal subunit protein uS5c (rps5) from Cyanophora paradoxa.